The chain runs to 346 residues: Dihydroorotate dehydrogenase (quinone) (346 aa).

FMN is bound by residues 61-65 (AGLDK) and Thr-85. Position 65 (Lys-65) interacts with substrate. A substrate-binding site is contributed by 110-114 (NRMGF). Positions 138 and 171 each coordinate FMN. Asn-171 serves as a coordination point for substrate. Ser-174 (nucleophile) is an active-site residue. Asn-176 lines the substrate pocket. Residues Lys-216 and Thr-244 each coordinate FMN. 245–246 (NT) serves as a coordination point for substrate. Residues Gly-267, Gly-296, and 317–318 (YS) each bind FMN.

This sequence belongs to the dihydroorotate dehydrogenase family. Type 2 subfamily. Monomer. The cofactor is FMN.

It is found in the cell membrane. The enzyme catalyses (S)-dihydroorotate + a quinone = orotate + a quinol. It functions in the pathway pyrimidine metabolism; UMP biosynthesis via de novo pathway; orotate from (S)-dihydroorotate (quinone route): step 1/1. In terms of biological role, catalyzes the conversion of dihydroorotate to orotate with quinone as electron acceptor. The protein is Dihydroorotate dehydrogenase (quinone) of Marinomonas sp. (strain MWYL1).